Reading from the N-terminus, the 25-residue chain is Kunitz-type serine protease inhibitor RsTIS5 (25 aa).

The 25-residue stretch at 1–25 (EAEPKPFNPVCYEPKEVGPCKAYVP) folds into the BPTI/Kunitz inhibitor domain.

Serine protease inhibitor. Inhibits trypsin, elastase and plasmin. Does not inhibit kallikrein. The chain is Kunitz-type serine protease inhibitor RsTIS5 from Rhipicephalus sanguineus (Brown dog tick).